The following is a 743-amino-acid chain: Keratin, type I cytoskeletal 9 (743 aa).

Over residues 1–16 (MSCRQSSSSFWSSSSS) the composition is skewed to low complexity. Positions 1–46 (MSCRQSSSSFWSSSSSCGGGGGRGGSGGSMRSSFSRSSRAGGGGGG) are disordered. Residues 1–130 (MSCRQSSSSF…GGEGGILNTN (130 aa)) form a head region. 2 positions are modified to phosphoserine: Ser14 and Ser16. Positions 17–28 (CGGGGGRGGSGG) are enriched in gly residues. The span at 29 to 39 (SMRSSFSRSSR) shows a compositional bias: low complexity. A phosphoserine mark is found at Ser55 and Ser155. Residues 131 to 166 (EKIVMQNLNSRLASYMEKVLELEESNTAMEKQIQDW) are coil 1A. Residues 131–443 (EKIVMQNLNS…ELLEGGQQDF (313 aa)) form the IF rod domain. A linker 1 region spans residues 167–185 (YSKRGPKVFQKDNTHYYDT). The interval 186–277 (IEDLKDRIVD…KNHKEEMSQL (92 aa)) is coil 1B. The segment at 278–300 (TGQNDGDVNVEINVAPSTDLTRV) is linker 12. The interval 301–439 (LNDMREEYEQ…ETYRELLEGG (139 aa)) is coil 2. Disordered regions lie at residues 440–468 (QQDF…GSYG) and 501–743 (GGSG…KMRY). The segment at 440 to 709 (QQDFESSGAG…GGGSGSGGGS (270 aa)) is tail. Composition is skewed to gly residues over residues 449-468 (GQIG…GSYG) and 501-717 (GGSG…GGGN).

It belongs to the intermediate filament family. As to quaternary structure, heterotetramer of two type I and two type II keratins. As to expression, expressed in footpad epidermis and testis (at protein level).

May serve an important special function either in the mature palmar and plantar skin tissue or in the morphogenetic program of the formation of these tissues. Plays a role in keratin filament assembly. Plays an essential role in the correct development of sperm. This Mus musculus (Mouse) protein is Keratin, type I cytoskeletal 9.